We begin with the raw amino-acid sequence, 38 residues long: Potassium channel toxin alpha-KTx 3.11 (38 aa).

3 cysteine pairs are disulfide-bonded: cysteine 8–cysteine 28, cysteine 14–cysteine 33, and cysteine 18–cysteine 35.

Belongs to the short scorpion toxin superfamily. Potassium channel inhibitor family. Alpha-KTx 03 subfamily. In terms of tissue distribution, expressed by the venom gland.

The protein resides in the secreted. Its function is as follows. Blocks the voltage-gated potassium channel Kv1.3/KCNA3 (IC(50)=7.2 nM). Correnti and colleagues have also shown that this toxin inhibits Kv1.1/KCNA1, which is different from Abdel-Mottaleb and colleagues conclusions. This is Potassium channel toxin alpha-KTx 3.11 from Odontobuthus doriae (Yellow Iranian scorpion).